The sequence spans 224 residues: Pyridoxine/pyridoxamine 5'-phosphate oxidase (224 aa).

Residues 19 to 22 (RGEY) and K81 each bind substrate. FMN is bound by residues 76 to 81 (RSVLCK), 91 to 92 (FT), K98, and Q120. Residues Y138 and R142 each contribute to the substrate site. FMN-binding positions include 155-156 (QS) and W201. Residue 207-209 (RMH) coordinates substrate. R211 is an FMN binding site.

Belongs to the pyridoxamine 5'-phosphate oxidase family. In terms of assembly, homodimer. FMN serves as cofactor.

The catalysed reaction is pyridoxamine 5'-phosphate + O2 + H2O = pyridoxal 5'-phosphate + H2O2 + NH4(+). The enzyme catalyses pyridoxine 5'-phosphate + O2 = pyridoxal 5'-phosphate + H2O2. Its pathway is cofactor metabolism; pyridoxal 5'-phosphate salvage; pyridoxal 5'-phosphate from pyridoxamine 5'-phosphate: step 1/1. It participates in cofactor metabolism; pyridoxal 5'-phosphate salvage; pyridoxal 5'-phosphate from pyridoxine 5'-phosphate: step 1/1. Its function is as follows. Catalyzes the oxidation of either pyridoxine 5'-phosphate (PNP) or pyridoxamine 5'-phosphate (PMP) into pyridoxal 5'-phosphate (PLP). This Mycobacterium bovis (strain ATCC BAA-935 / AF2122/97) protein is Pyridoxine/pyridoxamine 5'-phosphate oxidase.